The sequence spans 409 residues: All trans-polyprenyl-diphosphate synthase PDSS1 (409 aa).

Residues K128, R131, and H167 each coordinate isopentenyl diphosphate. D174 and D178 together coordinate Mg(2+). R184 serves as a coordination point for isopentenyl diphosphate.

This sequence belongs to the FPP/GGPP synthase family. Heterotetramer composed of 2 PDSS1/DPS1 and 2 PDSS2/DLP1 subunits. Mg(2+) is required as a cofactor.

The protein localises to the mitochondrion. It carries out the reaction 7 isopentenyl diphosphate + (2E,6E)-farnesyl diphosphate = all-trans-decaprenyl diphosphate + 7 diphosphate. The enzyme catalyses 6 isopentenyl diphosphate + (2E,6E)-farnesyl diphosphate = all-trans-nonaprenyl diphosphate + 6 diphosphate. It functions in the pathway cofactor biosynthesis; ubiquinone biosynthesis. Its function is as follows. Heterotetrameric enzyme that catalyzes the condensation of farnesyl diphosphate (FPP), which acts as a primer, and isopentenyl diphosphate (IPP) to produce prenyl diphosphates of varying chain lengths and participates in the determination of the side chain of ubiquinone. Supplies nona and decaprenyl diphosphate, the precursors for the side chain of the isoprenoid quinones ubiquinone-9 (Q9)and ubiquinone-10 (Q10) respectively. The enzyme adds isopentenyl diphosphate molecules sequentially to farnesyl diphosphate with trans stereochemistry. This is All trans-polyprenyl-diphosphate synthase PDSS1 from Mus musculus (Mouse).